Reading from the N-terminus, the 213-residue chain is Orotate phosphoribosyltransferase (213 aa).

Residue Lys-26 participates in 5-phospho-alpha-D-ribose 1-diphosphate binding. 34-35 (FF) is a binding site for orotate. 5-phospho-alpha-D-ribose 1-diphosphate is bound by residues 72-73 (YK), Arg-99, Lys-100, Lys-103, His-105, and 124-132 (DDVITAGTA). Orotate is bound by residues Thr-128 and Arg-156.

Belongs to the purine/pyrimidine phosphoribosyltransferase family. PyrE subfamily. Homodimer. Mg(2+) is required as a cofactor.

It catalyses the reaction orotidine 5'-phosphate + diphosphate = orotate + 5-phospho-alpha-D-ribose 1-diphosphate. The protein operates within pyrimidine metabolism; UMP biosynthesis via de novo pathway; UMP from orotate: step 1/2. Catalyzes the transfer of a ribosyl phosphate group from 5-phosphoribose 1-diphosphate to orotate, leading to the formation of orotidine monophosphate (OMP). This chain is Orotate phosphoribosyltransferase, found in Pseudomonas putida (strain GB-1).